A 314-amino-acid polypeptide reads, in one-letter code: Methionyl-tRNA formyltransferase (314 aa).

Residue 113–116 (SILP) participates in (6S)-5,6,7,8-tetrahydrofolate binding.

This sequence belongs to the Fmt family.

The catalysed reaction is L-methionyl-tRNA(fMet) + (6R)-10-formyltetrahydrofolate = N-formyl-L-methionyl-tRNA(fMet) + (6S)-5,6,7,8-tetrahydrofolate + H(+). Functionally, attaches a formyl group to the free amino group of methionyl-tRNA(fMet). The formyl group appears to play a dual role in the initiator identity of N-formylmethionyl-tRNA by promoting its recognition by IF2 and preventing the misappropriation of this tRNA by the elongation apparatus. This Photobacterium profundum (strain SS9) protein is Methionyl-tRNA formyltransferase.